The following is a 642-amino-acid chain: Threonine--tRNA ligase (642 aa).

The TGS domain occupies 1 to 61 (MIKVTFPDGN…EHDGKLQLLT (61 aa)). A catalytic region spans residues 240–539 (DHRKIGKDLD…LIEEYKGSFP (300 aa)). Positions 334, 385, and 516 each coordinate Zn(2+).

This sequence belongs to the class-II aminoacyl-tRNA synthetase family. In terms of assembly, homodimer. The cofactor is Zn(2+).

Its subcellular location is the cytoplasm. It catalyses the reaction tRNA(Thr) + L-threonine + ATP = L-threonyl-tRNA(Thr) + AMP + diphosphate + H(+). Functionally, catalyzes the attachment of threonine to tRNA(Thr) in a two-step reaction: L-threonine is first activated by ATP to form Thr-AMP and then transferred to the acceptor end of tRNA(Thr). Also edits incorrectly charged L-seryl-tRNA(Thr). This is Threonine--tRNA ligase from Acholeplasma laidlawii (strain PG-8A).